The primary structure comprises 264 residues: Neuferricin (264 aa).

Residues 1-22 form the signal peptide; the sequence is MLRCGGRGLLLGLAVAAAAVMA. A Cytochrome b5 heme-binding domain is found at 35-134; the sequence is FRLFIPEELS…KNYVCVGRVT (100 aa).

It belongs to the cytochrome b5 family. MAPR subfamily.

It localises to the secreted. Heme-binding protein which promotes neuronal but not astrocyte differentiation. The polypeptide is Neuferricin (Homo sapiens (Human)).